Here is a 470-residue protein sequence, read N- to C-terminus: ATP synthase subunit beta (470 aa).

An ATP-binding site is contributed by 157-164; sequence GGAGVGKT.

It belongs to the ATPase alpha/beta chains family. F-type ATPases have 2 components, CF(1) - the catalytic core - and CF(0) - the membrane proton channel. CF(1) has five subunits: alpha(3), beta(3), gamma(1), delta(1), epsilon(1). CF(0) has three main subunits: a(1), b(2) and c(9-12). The alpha and beta chains form an alternating ring which encloses part of the gamma chain. CF(1) is attached to CF(0) by a central stalk formed by the gamma and epsilon chains, while a peripheral stalk is formed by the delta and b chains.

It is found in the cell inner membrane. The enzyme catalyses ATP + H2O + 4 H(+)(in) = ADP + phosphate + 5 H(+)(out). Its function is as follows. Produces ATP from ADP in the presence of a proton gradient across the membrane. The catalytic sites are hosted primarily by the beta subunits. The sequence is that of ATP synthase subunit beta from Geobacter sulfurreducens (strain ATCC 51573 / DSM 12127 / PCA).